Here is a 42-residue protein sequence, read N- to C-terminus: Large ribosomal subunit protein bL36 (42 aa).

The protein belongs to the bacterial ribosomal protein bL36 family.

This chain is Large ribosomal subunit protein bL36, found in Anaplasma marginale (strain St. Maries).